The sequence spans 191 residues: Cell division protein SepF (191 aa).

The segment covering 151–165 (SSSPEEASPSSVPTE) has biased composition (low complexity). Residues 151–191 (SSSPEEASPSSVPTENTPQYSLGKNTTPEPAWGNSKLSAYS) are disordered. A compositionally biased stretch (polar residues) spans 166–178 (NTPQYSLGKNTTP).

Belongs to the SepF family. In terms of assembly, homodimer. Interacts with FtsZ.

Its subcellular location is the cytoplasm. Its function is as follows. Cell division protein that is part of the divisome complex and is recruited early to the Z-ring. Probably stimulates Z-ring formation, perhaps through the cross-linking of FtsZ protofilaments. Its function overlaps with FtsA. The chain is Cell division protein SepF from Prochlorococcus marinus (strain MIT 9215).